The chain runs to 278 residues: MAAIDGLPPLREVIRAHGLSAKKQLGQNFLLDLNLTAKIARLAGDLKGSDVLEVGPGPGGLTRGLLAEGARRVLAIEKDARCLPALAEVAAAWPGRLEVLNADALEVDVAARLTPPIRIVANLPYNVGTELLTRWLSSGWPPFWESLTLMFQKEVAERIVARPGSKAYGRLALLSQWRTEPKIVLTLPPEAFTPPPAIHSAVVHFTRLAGPRYPADAAVLSRVTAMAFNQRRKMLRSSLKGLAPDIETVLRDAGIEPTQRAEELSLEAFCALARRVAG.

6 residues coordinate S-adenosyl-L-methionine: Asn-28, Leu-30, Gly-55, Glu-77, Asp-103, and Asn-122.

The protein belongs to the class I-like SAM-binding methyltransferase superfamily. rRNA adenine N(6)-methyltransferase family. RsmA subfamily.

It is found in the cytoplasm. The enzyme catalyses adenosine(1518)/adenosine(1519) in 16S rRNA + 4 S-adenosyl-L-methionine = N(6)-dimethyladenosine(1518)/N(6)-dimethyladenosine(1519) in 16S rRNA + 4 S-adenosyl-L-homocysteine + 4 H(+). Functionally, specifically dimethylates two adjacent adenosines (A1518 and A1519) in the loop of a conserved hairpin near the 3'-end of 16S rRNA in the 30S particle. May play a critical role in biogenesis of 30S subunits. The protein is Ribosomal RNA small subunit methyltransferase A of Cereibacter sphaeroides (strain ATCC 17025 / ATH 2.4.3) (Rhodobacter sphaeroides).